We begin with the raw amino-acid sequence, 393 residues long: Chorismate synthase (393 aa).

Residues R39 and R45 each contribute to the NADP(+) site. Residues 133–135 (RSS), 256–257 (NA), G301, 316–320 (KPIPT), and R342 each bind FMN.

It belongs to the chorismate synthase family. Homotetramer. The cofactor is FMNH2.

The enzyme catalyses 5-O-(1-carboxyvinyl)-3-phosphoshikimate = chorismate + phosphate. The protein operates within metabolic intermediate biosynthesis; chorismate biosynthesis; chorismate from D-erythrose 4-phosphate and phosphoenolpyruvate: step 7/7. Catalyzes the anti-1,4-elimination of the C-3 phosphate and the C-6 proR hydrogen from 5-enolpyruvylshikimate-3-phosphate (EPSP) to yield chorismate, which is the branch point compound that serves as the starting substrate for the three terminal pathways of aromatic amino acid biosynthesis. This reaction introduces a second double bond into the aromatic ring system. This Lysinibacillus sphaericus (strain C3-41) protein is Chorismate synthase.